A 412-amino-acid chain; its full sequence is 4-hydroxyphenylpyruvate dioxygenase (412 aa).

VOC domains lie at 31–179 and 209–369; these read GYDH…LISR and RIDH…LFTK. Fe cation contacts are provided by histidine 212, histidine 295, and glutamate 380.

This sequence belongs to the 4HPPD family. Requires Fe cation as cofactor.

The enzyme catalyses 3-(4-hydroxyphenyl)pyruvate + O2 = homogentisate + CO2. It participates in amino-acid degradation; L-phenylalanine degradation; acetoacetate and fumarate from L-phenylalanine: step 3/6. The protein is 4-hydroxyphenylpyruvate dioxygenase of Neurospora crassa (strain ATCC 24698 / 74-OR23-1A / CBS 708.71 / DSM 1257 / FGSC 987).